Reading from the N-terminus, the 465-residue chain is UDP-N-acetylmuramoylalanine--D-glutamate ligase (465 aa).

Gly127–Thr133 provides a ligand contact to ATP.

This sequence belongs to the MurCDEF family.

The protein localises to the cytoplasm. The enzyme catalyses UDP-N-acetyl-alpha-D-muramoyl-L-alanine + D-glutamate + ATP = UDP-N-acetyl-alpha-D-muramoyl-L-alanyl-D-glutamate + ADP + phosphate + H(+). It participates in cell wall biogenesis; peptidoglycan biosynthesis. Its function is as follows. Cell wall formation. Catalyzes the addition of glutamate to the nucleotide precursor UDP-N-acetylmuramoyl-L-alanine (UMA). This is UDP-N-acetylmuramoylalanine--D-glutamate ligase from Cereibacter sphaeroides (strain ATCC 17025 / ATH 2.4.3) (Rhodobacter sphaeroides).